The sequence spans 315 residues: Methionyl-tRNA formyltransferase (315 aa).

113–116 (SLLP) is a (6S)-5,6,7,8-tetrahydrofolate binding site.

Belongs to the Fmt family.

The enzyme catalyses L-methionyl-tRNA(fMet) + (6R)-10-formyltetrahydrofolate = N-formyl-L-methionyl-tRNA(fMet) + (6S)-5,6,7,8-tetrahydrofolate + H(+). Its function is as follows. Attaches a formyl group to the free amino group of methionyl-tRNA(fMet). The formyl group appears to play a dual role in the initiator identity of N-formylmethionyl-tRNA by promoting its recognition by IF2 and preventing the misappropriation of this tRNA by the elongation apparatus. The sequence is that of Methionyl-tRNA formyltransferase from Shigella flexneri serotype 5b (strain 8401).